The chain runs to 85 residues: MKRNQRKVLIGIVKSTKNAKTATVQVESRFKHPLYHKSVVRHKKYQAHNEGEVLAKDGDKVQIVETRPLSATKRFRIAKIIERAK.

This sequence belongs to the universal ribosomal protein uS17 family. Part of the 30S ribosomal subunit.

Its function is as follows. One of the primary rRNA binding proteins, it binds specifically to the 5'-end of 16S ribosomal RNA. This is Small ribosomal subunit protein uS17 from Mycoplasma pneumoniae (strain ATCC 29342 / M129 / Subtype 1) (Mycoplasmoides pneumoniae).